Consider the following 620-residue polypeptide: Chaperone protein HscA homolog (620 aa).

The protein belongs to the heat shock protein 70 family.

Functionally, chaperone involved in the maturation of iron-sulfur cluster-containing proteins. Has a low intrinsic ATPase activity which is markedly stimulated by HscB. The chain is Chaperone protein HscA homolog from Shewanella oneidensis (strain ATCC 700550 / JCM 31522 / CIP 106686 / LMG 19005 / NCIMB 14063 / MR-1).